Here is a 119-residue protein sequence, read N- to C-terminus: Large ribosomal subunit protein uL18 (119 aa).

The protein belongs to the universal ribosomal protein uL18 family. In terms of assembly, part of the 50S ribosomal subunit; part of the 5S rRNA/L5/L18/L25 subcomplex. Contacts the 5S and 23S rRNAs.

Its function is as follows. This is one of the proteins that bind and probably mediate the attachment of the 5S RNA into the large ribosomal subunit, where it forms part of the central protuberance. In Cereibacter sphaeroides (strain ATCC 17025 / ATH 2.4.3) (Rhodobacter sphaeroides), this protein is Large ribosomal subunit protein uL18.